The following is a 670-amino-acid chain: DNA ligase (670 aa).

NAD(+) contacts are provided by residues 33-37 (DVEYD), 82-83 (SL), and glutamate 114. Lysine 116 acts as the N6-AMP-lysine intermediate in catalysis. 4 residues coordinate NAD(+): arginine 137, glutamate 174, lysine 291, and lysine 315. 4 residues coordinate Zn(2+): cysteine 409, cysteine 412, cysteine 427, and cysteine 433. The region spanning 593–670 (DQELPLEGKV…TEEDLIALIS (78 aa)) is the BRCT domain.

The protein belongs to the NAD-dependent DNA ligase family. LigA subfamily. Mg(2+) is required as a cofactor. The cofactor is Mn(2+).

The catalysed reaction is NAD(+) + (deoxyribonucleotide)n-3'-hydroxyl + 5'-phospho-(deoxyribonucleotide)m = (deoxyribonucleotide)n+m + AMP + beta-nicotinamide D-nucleotide.. In terms of biological role, DNA ligase that catalyzes the formation of phosphodiester linkages between 5'-phosphoryl and 3'-hydroxyl groups in double-stranded DNA using NAD as a coenzyme and as the energy source for the reaction. It is essential for DNA replication and repair of damaged DNA. The chain is DNA ligase from Vibrio atlanticus (strain LGP32) (Vibrio splendidus (strain Mel32)).